The following is a 101-amino-acid chain: NAD(P)H-quinone oxidoreductase subunit 4L, chloroplastic (101 aa).

The next 3 membrane-spanning stretches (helical) occupy residues 2-22 (MFEH…YGLI), 32-52 (MCLE…SDLF), and 61-81 (IFSI…LAIV).

It belongs to the complex I subunit 4L family. NDH is composed of at least 16 different subunits, 5 of which are encoded in the nucleus.

It localises to the plastid. Its subcellular location is the chloroplast thylakoid membrane. The enzyme catalyses a plastoquinone + NADH + (n+1) H(+)(in) = a plastoquinol + NAD(+) + n H(+)(out). The catalysed reaction is a plastoquinone + NADPH + (n+1) H(+)(in) = a plastoquinol + NADP(+) + n H(+)(out). In terms of biological role, NDH shuttles electrons from NAD(P)H:plastoquinone, via FMN and iron-sulfur (Fe-S) centers, to quinones in the photosynthetic chain and possibly in a chloroplast respiratory chain. The immediate electron acceptor for the enzyme in this species is believed to be plastoquinone. Couples the redox reaction to proton translocation, and thus conserves the redox energy in a proton gradient. This Lemna minor (Common duckweed) protein is NAD(P)H-quinone oxidoreductase subunit 4L, chloroplastic.